A 227-amino-acid chain; its full sequence is Cytochrome c oxidase subunit 2 (227 aa).

Over 1-14 (MAHPVQLSLQDATS) the chain is Mitochondrial intermembrane. The chain crosses the membrane as a helical span at residues 15 to 45 (PIMEELITFHDHAFMAMSLISFLVLYALALT). Over 46 to 59 (LTTKLTNTNITDAQ) the chain is Mitochondrial matrix. The helical transmembrane segment at 60 to 87 (EMETIWTILPAVILILIALPSLRVLYLT) threads the bilayer. Topologically, residues 88–227 (DEVNDPSLTI…IFEMGPVFTL (140 aa)) are mitochondrial intermembrane. 6 residues coordinate Cu cation: His161, Cys196, Glu198, Cys200, His204, and Met207. Residue Glu198 coordinates Mg(2+).

This sequence belongs to the cytochrome c oxidase subunit 2 family. As to quaternary structure, component of the cytochrome c oxidase (complex IV, CIV), a multisubunit enzyme composed of 14 subunits. The complex is composed of a catalytic core of 3 subunits MT-CO1, MT-CO2 and MT-CO3, encoded in the mitochondrial DNA, and 11 supernumerary subunits COX4I, COX5A, COX5B, COX6A, COX6B, COX6C, COX7A, COX7B, COX7C, COX8 and NDUFA4, which are encoded in the nuclear genome. The complex exists as a monomer or a dimer and forms supercomplexes (SCs) in the inner mitochondrial membrane with NADH-ubiquinone oxidoreductase (complex I, CI) and ubiquinol-cytochrome c oxidoreductase (cytochrome b-c1 complex, complex III, CIII), resulting in different assemblies (supercomplex SCI(1)III(2)IV(1) and megacomplex MCI(2)III(2)IV(2)). Found in a complex with TMEM177, COA6, COX18, COX20, SCO1 and SCO2. Interacts with TMEM177 in a COX20-dependent manner. Interacts with COX20. Interacts with COX16. It depends on Cu cation as a cofactor.

It is found in the mitochondrion inner membrane. It catalyses the reaction 4 Fe(II)-[cytochrome c] + O2 + 8 H(+)(in) = 4 Fe(III)-[cytochrome c] + 2 H2O + 4 H(+)(out). Functionally, component of the cytochrome c oxidase, the last enzyme in the mitochondrial electron transport chain which drives oxidative phosphorylation. The respiratory chain contains 3 multisubunit complexes succinate dehydrogenase (complex II, CII), ubiquinol-cytochrome c oxidoreductase (cytochrome b-c1 complex, complex III, CIII) and cytochrome c oxidase (complex IV, CIV), that cooperate to transfer electrons derived from NADH and succinate to molecular oxygen, creating an electrochemical gradient over the inner membrane that drives transmembrane transport and the ATP synthase. Cytochrome c oxidase is the component of the respiratory chain that catalyzes the reduction of oxygen to water. Electrons originating from reduced cytochrome c in the intermembrane space (IMS) are transferred via the dinuclear copper A center (CU(A)) of subunit 2 and heme A of subunit 1 to the active site in subunit 1, a binuclear center (BNC) formed by heme A3 and copper B (CU(B)). The BNC reduces molecular oxygen to 2 water molecules using 4 electrons from cytochrome c in the IMS and 4 protons from the mitochondrial matrix. This chain is Cytochrome c oxidase subunit 2 (MT-CO2), found in Macaca fascicularis (Crab-eating macaque).